A 375-amino-acid polypeptide reads, in one-letter code: Leucoanthocyanidin dioxygenase 1 (375 aa).

The Fe2OG dioxygenase domain occupies 218–317 (LLLQLKINYY…RLSWVVFCEP (100 aa)). The Fe cation site is built by histidine 242, aspartate 244, and histidine 298. A 2-oxoglutarate-binding site is contributed by arginine 308.

Belongs to the iron/ascorbate-dependent oxidoreductase family. Requires L-ascorbate as cofactor. It depends on Fe(2+) as a cofactor.

It carries out the reaction a (2R,3S,4S)-leucoanthocyanidin + 2-oxoglutarate + O2 = a 4-H-anthocyanidin with a 3-hydroxy group + succinate + CO2 + 2 H2O. It participates in pigment biosynthesis; anthocyanin biosynthesis. Involved in anthocyanin and protoanthocyanidin biosynthesis by catalyzing the oxidation of leucoanthocyanidins into anthocyanidins. Is able to synthesize anthocyanin pigments from leucoanthocyanidins in aleurone tissue. Converts dihydroquercetin to quercetin in vitro. The polypeptide is Leucoanthocyanidin dioxygenase 1 (Oryza sativa subsp. indica (Rice)).